Here is a 155-residue protein sequence, read N- to C-terminus: Effector protein PevD1 (155 aa).

The first 18 residues, 1-18 (MQFTLAAAAALFGASALA), serve as a signal peptide directing secretion. An AA1-like domain is found at 33–148 (NMYENIDIAD…NPTTIVIDSL (116 aa)). 2 cysteine pairs are disulfide-bonded: C70/C84 and C125/C135.

In terms of assembly, monomer. Interacts with Arabidopsis thaliana NRP.

Its subcellular location is the secreted. Its function is as follows. Effector protein. Elicits a hypersensitive response (HR) in tobacco plants (N.tabacum) and cotton (G.hirsutum). Boosts systemic acquired resistance (SAR) to tobacco mosaic virus (TMV) infection in N.tabacum and to V.dhaliae infection in primed cotton seedlings. This Verticillium dahliae (Verticillium wilt) protein is Effector protein PevD1.